Here is a 337-residue protein sequence, read N- to C-terminus: m7GpppX diphosphatase (337 aa).

The disordered stretch occupies residues 1–35 (MADAAPQLGKRKRELDVEEAHAASTEEKEAGVGNG). N-acetylalanine is present on Ala2. Residues 10–13 (KRKR) carry the nuclear localization signal (NLS) motif. Residues 13–30 (RELDVEEAHAASTEEKEA) are compositionally biased toward basic and acidic residues. Phosphoserine is present on residues Ser24 and Ser101. Lys138 and Lys142 each carry N6-acetyllysine. The nuclear export sequence (NES) motif lies at 142 to 154 (KYLRQDLRLIRET). Substrate contacts are provided by residues Trp175, Glu185, Asp205, Lys207, and 268 to 279 (HYLPSYYHLHVH). Positions 275-279 (HLHVH) match the Histidine triad motif motif. His277 (nucleophile) is an active-site residue.

The protein belongs to the HIT family. Homodimer. Associates with components of the exosome multienzyme ribonuclease complex, such as EXOSC3 and EXOSC4. Interacts with NDOR1. In terms of tissue distribution, detected in liver, brain, kidney, testis and prostate.

It is found in the cytoplasm. The protein resides in the nucleus. The catalysed reaction is a 5'-end (N(7)-methyl 5'-triphosphoguanosine)-ribonucleoside in mRNA + H2O = N(7)-methyl-GMP + a 5'-end diphospho-ribonucleoside in mRNA + 2 H(+). With respect to regulation, the hydrolytic product 7-methylguanosine diphosphate (m7GDP) efficiently inhibits the decapping scavenger activity and acts as a competitive inhibitor in vitro. Inhibited by 2,4-diaminoquinazoline. Decapping scavenger enzyme that catalyzes the cleavage of a residual cap structure following the degradation of mRNAs by the 3'-&gt;5' exosome-mediated mRNA decay pathway. Hydrolyzes cap analog structures like 7-methylguanosine nucleoside triphosphate (m7GpppG) with up to 10 nucleotide substrates (small capped oligoribonucleotides) and specifically releases 5'-phosphorylated RNA fragments and 7-methylguanosine monophosphate (m7GMP). Cleaves cap analog structures like tri-methyl guanosine nucleoside triphosphate (m3(2,2,7)GpppG) with very poor efficiency. Does not hydrolyze unmethylated cap analog (GpppG) and shows no decapping activity on intact m7GpppG-capped mRNA molecules longer than 25 nucleotides. Does not hydrolyze 7-methylguanosine diphosphate (m7GDP) to m7GMP. May also play a role in the 5'-&gt;3 mRNA decay pathway; m7GDP, the downstream product released by the 5'-&gt;3' mRNA mediated decapping activity, may be also converted by DCPS to m7GMP. Binds to m7GpppG and strongly to m7GDP. Plays a role in first intron splicing of pre-mRNAs. Inhibits activation-induced cell death. This chain is m7GpppX diphosphatase (DCPS), found in Homo sapiens (Human).